A 296-amino-acid chain; its full sequence is Glycine--tRNA ligase alpha subunit (296 aa).

It belongs to the class-II aminoacyl-tRNA synthetase family. In terms of assembly, tetramer of two alpha and two beta subunits.

The protein resides in the cytoplasm. The enzyme catalyses tRNA(Gly) + glycine + ATP = glycyl-tRNA(Gly) + AMP + diphosphate. This Desulfitobacterium hafniense (strain DSM 10664 / DCB-2) protein is Glycine--tRNA ligase alpha subunit.